Consider the following 558-residue polypeptide: Acylase ACY 1 proenzyme (558 aa).

Thr-368 serves as the catalytic Nucleophile.

Belongs to the gamma-glutamyltransferase family. In terms of assembly, dimer of two non-identical chains processed from the same precursor.

It catalyses the reaction (7R)-7-(4-carboxybutanamido)cephalosporanate + H2O = (7R)-7-aminocephalosporanate + glutarate. The catalysed reaction is an N-terminal (5-L-glutamyl)-[peptide] + an alpha-amino acid = 5-L-glutamyl amino acid + an N-terminal L-alpha-aminoacyl-[peptide]. It carries out the reaction glutathione + H2O = L-cysteinylglycine + L-glutamate. The enzyme catalyses an S-substituted glutathione + H2O = an S-substituted L-cysteinylglycine + L-glutamate. Besides the cephalosporin acylase I activity which converts GL-7ACA into 7-ACA; this enzyme displays some gamma glutamyltranspeptidase activity. This chain is Acylase ACY 1 proenzyme (acyI), found in Pseudomonas sp. (strain SE83).